Reading from the N-terminus, the 1028-residue chain is Contactin-3 (1028 aa).

The N-terminal stretch at 1–19 (MMFPWKQLILLSFIGCLGG) is a signal peptide. 6 Ig-like C2-type domains span residues 26–117 (PVFI…AKLQ), 122–208 (ENFK…ARVL), 227–313 (PKIE…GRLT), 318–402 (PHWV…AELK), 408–497 (PDFS…LVVT), and 499–593 (PTRI…ADLI). 5 disulfides stabilise this stretch: Cys-50-Cys-100, Cys-144-Cys-196, Cys-249-Cys-297, Cys-339-Cys-386, and Cys-431-Cys-479. N-linked (GlcNAc...) asparagine glycans are attached at residues Asn-65 and Asn-193. N-linked (GlcNAc...) asparagine glycosylation is found at Asn-375, Asn-468, and Asn-489. Cys-521 and Cys-577 form a disulfide bridge. Fibronectin type-III domains follow at residues 600–698 (PPEN…TEEA), 703–800 (PPSE…SAEE), 805–901 (APSQ…TKKT), and 902–998 (PPSQ…TSMD). The tract at residues 684–713 (GEPSLPSEKVRTEEAVPEVPPSEVNGGGGS) is disordered. Asn-765, Asn-860, Asn-895, Asn-913, Asn-931, and Asn-956 each carry an N-linked (GlcNAc...) asparagine glycan. Ser-1002 is lipidated: GPI-anchor amidated serine. Residues 1003–1028 (TSAISNVHPMSSYMPIVLFLIVYVLW) constitute a propeptide, removed in mature form.

Belongs to the immunoglobulin superfamily. Contactin family. As to quaternary structure, interacts with PTPRG. In terms of tissue distribution, in brain, it is expressed in frontal lobe, occipital lobe, cerebellum and amygdala.

It is found in the cell membrane. Functionally, contactins mediate cell surface interactions during nervous system development. Has some neurite outgrowth-promoting activity. This chain is Contactin-3 (CNTN3), found in Homo sapiens (Human).